The following is a 490-amino-acid chain: MRINPTTSGSEVSAVEKKNLGRIVKIIGPVLDVAFPPGKMPNIYNALVVQGRGNEQTNVTCEVQQLLGNNRVRAVAMSDTDGLMRGMEVIDTGAPISVPVGGSTLGRIFNVLGQPVDNLGPVDTNTTSPIHRSAPAFIQLDTKLSIFETGIKVVDLLAPYRRGGKIGLFGGAGVGKTVLIMELINNIAKAHGGVSVFGGVGERTREGNDLYLEMKESGVINEENIPESKVALVYGQMNEPPGARMRVGLTALTMAEYFRDVNEQDVLLFIDNIFRFVQAGSEVSALLGRMPSAVGYQPTLSTEMGSLQERITSTKEGSITSIQAVYVPADDLTDPAPATTFAHLDATTVLSRGLAAKGIYPAVDPLDSTSTMLQPRIVGEEHYETAQRVKQTLQRYKELQDIIAILGLDELSEEDRLTVARARKIERFLSQPFFVAEVFTGSPGKYVGLAETIRGFQLILSGELDGLPEQAFYLVGNIDEATAKAMNLKT.

170 to 177 (GGAGVGKT) contributes to the ATP binding site.

Belongs to the ATPase alpha/beta chains family. As to quaternary structure, F-type ATPases have 2 components, CF(1) - the catalytic core - and CF(0) - the membrane proton channel. CF(1) has five subunits: alpha(3), beta(3), gamma(1), delta(1), epsilon(1). CF(0) has four main subunits: a(1), b(1), b'(1) and c(9-12).

It is found in the plastid. The protein resides in the chloroplast thylakoid membrane. It catalyses the reaction ATP + H2O + 4 H(+)(in) = ADP + phosphate + 5 H(+)(out). In terms of biological role, produces ATP from ADP in the presence of a proton gradient across the membrane. The catalytic sites are hosted primarily by the beta subunits. In Ipomoea setosa (Brazilian morning glory), this protein is ATP synthase subunit beta, chloroplastic.